Reading from the N-terminus, the 490-residue chain is Acetyl-coenzyme A carboxylase carboxyl transferase subunit beta, chloroplastic (490 aa).

The CoA carboxyltransferase N-terminal domain occupies 221-490 (LWVQCENCYG…PLNQKSSKIK (270 aa)). 4 residues coordinate Zn(2+): cysteine 225, cysteine 228, cysteine 244, and cysteine 247. The C4-type zinc-finger motif lies at 225-247 (CENCYGLNYKKFLKSKMNICEQC).

The protein belongs to the AccD/PCCB family. As to quaternary structure, acetyl-CoA carboxylase is a heterohexamer composed of biotin carboxyl carrier protein, biotin carboxylase and 2 subunits each of ACCase subunit alpha and ACCase plastid-coded subunit beta (accD). The cofactor is Zn(2+). Expressed in leaves, ripening and mature fruit.

It localises to the plastid. Its subcellular location is the chloroplast stroma. It is found in the chromoplast stroma. The enzyme catalyses N(6)-carboxybiotinyl-L-lysyl-[protein] + acetyl-CoA = N(6)-biotinyl-L-lysyl-[protein] + malonyl-CoA. Its pathway is lipid metabolism; malonyl-CoA biosynthesis; malonyl-CoA from acetyl-CoA: step 1/1. Its function is as follows. Component of the acetyl coenzyme A carboxylase (ACC) complex. Biotin carboxylase (BC) catalyzes the carboxylation of biotin on its carrier protein (BCCP) and then the CO(2) group is transferred by the transcarboxylase to acetyl-CoA to form malonyl-CoA. Is up-regulated upon chromoplast differentiation, presumably for fatty acid biosynthesis. This chain is Acetyl-coenzyme A carboxylase carboxyl transferase subunit beta, chloroplastic, found in Solanum lycopersicum (Tomato).